A 206-amino-acid polypeptide reads, in one-letter code: Small ribosomal subunit protein uS4 (206 aa).

The S4 RNA-binding domain maps to 94–156; sequence RRLDNVVYRL…SRRRMYFKNL (63 aa).

This sequence belongs to the universal ribosomal protein uS4 family. As to quaternary structure, part of the 30S ribosomal subunit. Contacts protein S5. The interaction surface between S4 and S5 is involved in control of translational fidelity.

In terms of biological role, one of the primary rRNA binding proteins, it binds directly to 16S rRNA where it nucleates assembly of the body of the 30S subunit. Its function is as follows. With S5 and S12 plays an important role in translational accuracy. The sequence is that of Small ribosomal subunit protein uS4 from Roseiflexus castenholzii (strain DSM 13941 / HLO8).